The sequence spans 468 residues: 6-phospho-beta-galactosidase (468 aa).

D-galactose 6-phosphate is bound by residues Gln19, His116, Asn159, Glu160, and Asn297. Glu160 functions as the Proton donor in the catalytic mechanism. Glu375 (nucleophile) is an active-site residue. D-galactose 6-phosphate-binding residues include Ser428, Trp429, Lys435, and Tyr437.

Belongs to the glycosyl hydrolase 1 family.

The catalysed reaction is a 6-phospho-beta-D-galactoside + H2O = D-galactose 6-phosphate + an alcohol. It participates in carbohydrate metabolism; lactose degradation; D-galactose 6-phosphate and beta-D-glucose from lactose 6-phosphate: step 1/1. In Lactococcus lactis subsp. lactis (Streptococcus lactis), this protein is 6-phospho-beta-galactosidase.